The primary structure comprises 688 residues: Glycine--tRNA ligase beta subunit (688 aa).

This sequence belongs to the class-II aminoacyl-tRNA synthetase family. In terms of assembly, tetramer of two alpha and two beta subunits.

The protein localises to the cytoplasm. The enzyme catalyses tRNA(Gly) + glycine + ATP = glycyl-tRNA(Gly) + AMP + diphosphate. The protein is Glycine--tRNA ligase beta subunit of Chromohalobacter salexigens (strain ATCC BAA-138 / DSM 3043 / CIP 106854 / NCIMB 13768 / 1H11).